Here is a 455-residue protein sequence, read N- to C-terminus: Chromosomal replication initiator protein DnaA (455 aa).

The tract at residues 1 to 74 (MFDIEKFWQH…IQSAYGYAGI (74 aa)) is domain I, interacts with DnaA modulators. Positions 74-117 (IEILPVFQINENNDSPERIVTPEPRYAIQLQQEKRAHKQFTKNL) are domain II. The tract at residues 118–334 (KLNEKYTFDN…GALVKVQAYA (217 aa)) is domain III, AAA+ region. The ATP site is built by G162, G164, K165, and T166. The interval 335–455 (TIERADINVN…VFDLKQMIEH (121 aa)) is domain IV, binds dsDNA.

It belongs to the DnaA family. Oligomerizes as a right-handed, spiral filament on DNA at oriC.

Its subcellular location is the cytoplasm. Plays an essential role in the initiation and regulation of chromosomal replication. ATP-DnaA binds to the origin of replication (oriC) to initiate formation of the DNA replication initiation complex once per cell cycle. Binds the DnaA box (a 9 base pair repeat at the origin) and separates the double-stranded (ds)DNA. Forms a right-handed helical filament on oriC DNA; dsDNA binds to the exterior of the filament while single-stranded (ss)DNA is stabiized in the filament's interior. The ATP-DnaA-oriC complex binds and stabilizes one strand of the AT-rich DNA unwinding element (DUE), permitting loading of DNA polymerase. After initiation quickly degrades to an ADP-DnaA complex that is not apt for DNA replication. Binds acidic phospholipids. The protein is Chromosomal replication initiator protein DnaA of Lactobacillus helveticus (strain DPC 4571).